Here is a 447-residue protein sequence, read N- to C-terminus: Argininosuccinate synthase (447 aa).

ATP contacts are provided by residues 17-25 and alanine 43; that span reads AFSGGLDTS. Position 99 (tyrosine 99) interacts with L-citrulline. ATP contacts are provided by glycine 129 and threonine 131. 3 residues coordinate L-aspartate: threonine 131, asparagine 135, and aspartate 136. Residue asparagine 135 coordinates L-citrulline. Aspartate 136 serves as a coordination point for ATP. L-citrulline contacts are provided by arginine 139 and serine 192. Aspartate 194 contacts ATP. Threonine 201, glutamate 203, and glutamate 280 together coordinate L-citrulline.

It belongs to the argininosuccinate synthase family. Type 2 subfamily. In terms of assembly, homotetramer.

Its subcellular location is the cytoplasm. It catalyses the reaction L-citrulline + L-aspartate + ATP = 2-(N(omega)-L-arginino)succinate + AMP + diphosphate + H(+). It functions in the pathway amino-acid biosynthesis; L-arginine biosynthesis; L-arginine from L-ornithine and carbamoyl phosphate: step 2/3. The sequence is that of Argininosuccinate synthase from Escherichia coli O127:H6 (strain E2348/69 / EPEC).